Reading from the N-terminus, the 563-residue chain is Glutamate--tRNA ligase (563 aa).

Residues 61–94 (PEEQQKEVESLGGLEQHTKKEEKPKGLPELKNTE) form a disordered region. The span at 76–94 (QHTKKEEKPKGLPELKNTE) shows a compositional bias: basic and acidic residues. Positions 104-114 (PNPSGPLHIGH) match the 'HIGH' region motif.

Belongs to the class-I aminoacyl-tRNA synthetase family. Glutamate--tRNA ligase type 2 subfamily.

The protein resides in the cytoplasm. It carries out the reaction tRNA(Glu) + L-glutamate + ATP = L-glutamyl-tRNA(Glu) + AMP + diphosphate. Functionally, catalyzes the attachment of glutamate to tRNA(Glu) in a two-step reaction: glutamate is first activated by ATP to form Glu-AMP and then transferred to the acceptor end of tRNA(Glu). The protein is Glutamate--tRNA ligase of Methanosphaera stadtmanae (strain ATCC 43021 / DSM 3091 / JCM 11832 / MCB-3).